Consider the following 529-residue polypeptide: Corneodesmosin (529 aa).

Positions 1 to 32 (MGSSRAPWMGRVGGHGMMALLLAGLLLPGTLA) are cleaved as a signal peptide. Disordered stretches follow at residues 38-248 (FSDP…SVSG) and 383-492 (GSTG…SSAG). 6 stretches are compositionally biased toward low complexity: residues 58-83 (GKGDSSGFSSYSGSSSSGSSISSARS), 90-100 (GSSSGSSIAQG), 111-175 (GYSQ…NGSA), 189-231 (PSQP…SGGP), 392-408 (SPSSSRVPSSSSISSSS), and 426-441 (PGTGSFSSSSSSQSSG). Asparagine 172 is a glycosylation site (N-linked (GlcNAc...) asparagine). Polar residues predominate over residues 449 to 467 (GSKSSSSGHPCMSVSSLTL).

Exclusively expressed in skin.

It localises to the secreted. Its function is as follows. Important for the epidermal barrier integrity. The sequence is that of Corneodesmosin (CDSN) from Homo sapiens (Human).